Here is a 405-residue protein sequence, read N- to C-terminus: Formate-dependent phosphoribosylglycinamide formyltransferase (405 aa).

Residues 22 to 23 (EL) and Glu82 contribute to the N(1)-(5-phospho-beta-D-ribosyl)glycinamide site. ATP contacts are provided by residues Arg115, Lys162, 167-172 (SSGKGQ), 202-205 (EGFI), and Glu210. Positions 120–320 (RLAAETLGLA…EFELHARAIL (201 aa)) constitute an ATP-grasp domain. 2 residues coordinate Mg(2+): Glu279 and Glu291. Residues Asp298, Lys367, and 374–375 (RR) each bind N(1)-(5-phospho-beta-D-ribosyl)glycinamide.

This sequence belongs to the PurK/PurT family. In terms of assembly, homodimer.

It carries out the reaction N(1)-(5-phospho-beta-D-ribosyl)glycinamide + formate + ATP = N(2)-formyl-N(1)-(5-phospho-beta-D-ribosyl)glycinamide + ADP + phosphate + H(+). It functions in the pathway purine metabolism; IMP biosynthesis via de novo pathway; N(2)-formyl-N(1)-(5-phospho-D-ribosyl)glycinamide from N(1)-(5-phospho-D-ribosyl)glycinamide (formate route): step 1/1. Functionally, involved in the de novo purine biosynthesis. Catalyzes the transfer of formate to 5-phospho-ribosyl-glycinamide (GAR), producing 5-phospho-ribosyl-N-formylglycinamide (FGAR). Formate is provided by PurU via hydrolysis of 10-formyl-tetrahydrofolate. This Delftia acidovorans (strain DSM 14801 / SPH-1) protein is Formate-dependent phosphoribosylglycinamide formyltransferase.